A 236-amino-acid polypeptide reads, in one-letter code: Probable metal transport system ATP-binding protein CT_416 (236 aa).

The ABC transporter domain occupies Met-5–Pro-236. Gly-39–Thr-46 is an ATP binding site.

It belongs to the ABC transporter superfamily.

The protein resides in the cell inner membrane. Part of an ATP-driven transport system CT_415/CT_416/CT_417 for a metal. Probably responsible for energy coupling to the transport system. This is Probable metal transport system ATP-binding protein CT_416 from Chlamydia trachomatis serovar D (strain ATCC VR-885 / DSM 19411 / UW-3/Cx).